Reading from the N-terminus, the 350-residue chain is Biotin synthase (350 aa).

In terms of domain architecture, Radical SAM core spans Asn-42 to Arg-269. Residues Cys-57, Cys-61, and Cys-64 each coordinate [4Fe-4S] cluster. Positions 101, 132, 192, and 264 each coordinate [2Fe-2S] cluster.

The protein belongs to the radical SAM superfamily. Biotin synthase family. As to quaternary structure, homodimer. The cofactor is [4Fe-4S] cluster. Requires [2Fe-2S] cluster as cofactor.

It catalyses the reaction (4R,5S)-dethiobiotin + (sulfur carrier)-SH + 2 reduced [2Fe-2S]-[ferredoxin] + 2 S-adenosyl-L-methionine = (sulfur carrier)-H + biotin + 2 5'-deoxyadenosine + 2 L-methionine + 2 oxidized [2Fe-2S]-[ferredoxin]. Its pathway is cofactor biosynthesis; biotin biosynthesis; biotin from 7,8-diaminononanoate: step 2/2. Its function is as follows. Catalyzes the conversion of dethiobiotin (DTB) to biotin by the insertion of a sulfur atom into dethiobiotin via a radical-based mechanism. The polypeptide is Biotin synthase (Saccharophagus degradans (strain 2-40 / ATCC 43961 / DSM 17024)).